Consider the following 854-residue polypeptide: Golgin subfamily A member 6-like protein 22 (854 aa).

Disordered stretches follow at residues 1 to 114, 320 to 348, 366 to 447, 481 to 568, 581 to 681, and 714 to 854; these read MLMW…HQEA, QEEK…MRRQ, MHEQ…MWRQ, QEEK…MWRQ, RQEE…EQEE, and QEEK…MQEH. A compositionally biased stretch (basic residues) spans 15-35; it reads LPTHPHLPTHPHLPTHPHLPT. Basic and acidic residues predominate over residues 45 to 66; sequence MSKETRQSKLAEAKEQLTDHHP. 2 stretches are compositionally biased toward polar residues: residues 67 to 77 and 85 to 97; these read QTNPSVGTAAS and NNGT…TSGG. Residues 100 to 114 show a composition bias toward basic and acidic residues; sequence SPEDEQKASHQHQEA. Residues 103–854 adopt a coiled-coil conformation; it reads DEQKASHQHQ…RQQEEKMQEH (752 aa).

The protein belongs to the GOLGA6 family.

The polypeptide is Golgin subfamily A member 6-like protein 22 (Homo sapiens (Human)).